A 416-amino-acid polypeptide reads, in one-letter code: Cyclic dinucleotide synthase CdnG (416 aa).

Ser72 contacts GTP. Active-site residues include Asp89, Asp91, and Asp140. Asp91 lines the GTP pocket. Residue Asp91 participates in Mg(2+) binding. Positions 145–167 (RRRAPKEKEGEIPHAKKGTRSDP) are disordered. Positions 150 to 167 (KEKEGEIPHAKKGTRSDP) are enriched in basic and acidic residues. Lys236, Ser253, Glu305, Arg306, and Asp309 together coordinate GTP.

The protein belongs to the CD-NTase family. G10 subfamily. Mg(2+) is required as a cofactor.

The catalysed reaction is UTP + GTP = 3',3'-cGMP-UMP + 2 diphosphate. The enzyme catalyses GTP + ATP = 3',3'-cGAMP + 2 diphosphate. It carries out the reaction 2 ATP = 3',3'-c-di-AMP + 2 diphosphate. In terms of biological role, cyclic nucleotide synthase (second messenger synthase) of a CBASS antivirus system. CBASS (cyclic oligonucleotide-based antiphage signaling system) provides immunity against bacteriophage. The CD-NTase protein synthesizes cyclic nucleotides in response to infection; these serve as specific second messenger signals. The signals activate a diverse range of effectors, leading to bacterial cell death and thus abortive phage infection. A type II-short CBASS system. Functionally, cyclic dinucleotide synthase that catalyzes the synthesis of predominantly 3'3'-cGMP-UMP, followed by 3'3'-cGAMP and c-di-AMP in a reaction mixture of ATP, CTP, GTP and UTP. The cyclic nucleotide products are second messengers that activate the CBASS Cap5 effector nuclease, leading to DNA degradation and probably cell death. Cyclic nucleotides do not activate the effector equally; reactions with ATP/GTP, ATP/UTP and ATP alone activate Cap5, whereas reaction with GTP/UTP (the major in vitro product) do not. In Bradyrhizobium diazoefficiens (strain JCM 10833 / BCRC 13528 / IAM 13628 / NBRC 14792 / USDA 110), this protein is Cyclic dinucleotide synthase CdnG.